The chain runs to 607 residues: Matrix metalloproteinase-16 (607 aa).

The signal sequence occupies residues 1 to 31 (MILLAFSSGRRLDFVHRSGVFFLQTLLWILC). Positions 32–119 (ATVCGTEQYF…SSKFNIRRKR (88 aa)) are excised as a propeptide. Asn-83 carries an N-linked (GlcNAc...) asparagine glycan. A Cysteine switch motif is present at residues 99 to 106 (PRCGVPDQ). A Zn(2+)-binding site is contributed by Cys-101. The Extracellular segment spans residues 120–564 (YALTGQKWQH…LDNTASTVKA (445 aa)). Residue Asp-183 participates in Ca(2+) binding. Positions 193 and 195 each coordinate Zn(2+). Residues Asp-200, Gly-201, Gly-203, and Phe-205 each coordinate Ca(2+). His-208 contributes to the Zn(2+) binding site. Positions 215, 217, and 219 each coordinate Ca(2+). His-221 contacts Zn(2+). 2 residues coordinate Ca(2+): Asp-223 and Glu-226. Zn(2+) is bound at residue His-246. Residue Glu-247 is part of the active site. Positions 250 and 256 each coordinate Zn(2+). Residues 281-340 (DDLQGIQKIYGPPDKIPPPTRPLPTVPPHRSVPPADPRRHDRPKPPRPPTGRPSYPGAKP) form a disordered region. Residues 294-315 (DKIPPPTRPLPTVPPHRSVPPA) are compositionally biased toward pro residues. Hemopexin repeat units follow at residues 340–388 (PNIC…WRGL), 389–434 (PPSI…GNGI), 436–484 (PHGI…KGIP), and 485–532 (ESPQ…FMGC). Cys-343 and Cys-532 are oxidised to a cystine. The helical transmembrane segment at 565–585 (IAIVIPCILALCLLVLVYTVF) threads the bilayer. The Cytoplasmic portion of the chain corresponds to 586–607 (QFKRKGTPRHILYCKRSMQEWV).

The protein belongs to the peptidase M10A family. Interacts with CSPG4 through CSPG4 chondroitin sulfate glycosaminoglycan. The cofactor is Zn(2+). Ca(2+) serves as cofactor. In terms of processing, the precursor is cleaved by a furin endopeptidase.

The protein localises to the cell membrane. Its function is as follows. Endopeptidase that degrades various components of the extracellular matrix, such as collagen type III and fibronectin. Activates progelatinase A. Involved in the matrix remodeling of blood vessels. It has no effect on type I, II, IV and V collagen. However, upon interaction with CSPG4, it may be involved in degradation and invasion of type I collagen by melanoma cells. The chain is Matrix metalloproteinase-16 (Mmp16) from Mus musculus (Mouse).